Consider the following 482-residue polypeptide: tRNA sulfurtransferase (482 aa).

In terms of domain architecture, THUMP spans 61-165 (LTIRDALTRI…DDRLLLIKGR (105 aa)). Residues 183–184 (LI), lysine 265, glycine 287, and glutamine 296 each bind ATP. Residues cysteine 344 and cysteine 456 are joined by a disulfide bond. One can recognise a Rhodanese domain in the interval 404 to 482 (FGPNDVILDI…GFKNVKVYRP (79 aa)). Residue cysteine 456 is the Cysteine persulfide intermediate of the active site.

The protein belongs to the ThiI family. Interacts with IscS.

It is found in the cytoplasm. The enzyme catalyses [ThiI sulfur-carrier protein]-S-sulfanyl-L-cysteine + a uridine in tRNA + 2 reduced [2Fe-2S]-[ferredoxin] + ATP + H(+) = [ThiI sulfur-carrier protein]-L-cysteine + a 4-thiouridine in tRNA + 2 oxidized [2Fe-2S]-[ferredoxin] + AMP + diphosphate. The catalysed reaction is [ThiS sulfur-carrier protein]-C-terminal Gly-Gly-AMP + S-sulfanyl-L-cysteinyl-[cysteine desulfurase] + AH2 = [ThiS sulfur-carrier protein]-C-terminal-Gly-aminoethanethioate + L-cysteinyl-[cysteine desulfurase] + A + AMP + 2 H(+). The protein operates within cofactor biosynthesis; thiamine diphosphate biosynthesis. In terms of biological role, catalyzes the ATP-dependent transfer of a sulfur to tRNA to produce 4-thiouridine in position 8 of tRNAs, which functions as a near-UV photosensor. Also catalyzes the transfer of sulfur to the sulfur carrier protein ThiS, forming ThiS-thiocarboxylate. This is a step in the synthesis of thiazole, in the thiamine biosynthesis pathway. The sulfur is donated as persulfide by IscS. The sequence is that of tRNA sulfurtransferase from Escherichia coli O157:H7.